A 207-amino-acid chain; its full sequence is Small ribosomal subunit protein uS4 (207 aa).

The disordered stretch occupies residues 31–55; sequence KCKLDSKPGQHGRTSGARTSDYGTQ. Positions 42 to 53 are enriched in polar residues; sequence GRTSGARTSDYG. An S4 RNA-binding domain is found at 97–157; sequence SRLDNVVYRM…EQKKKQARIL (61 aa).

Belongs to the universal ribosomal protein uS4 family. Part of the 30S ribosomal subunit. Contacts protein S5. The interaction surface between S4 and S5 is involved in control of translational fidelity.

In terms of biological role, one of the primary rRNA binding proteins, it binds directly to 16S rRNA where it nucleates assembly of the body of the 30S subunit. Functionally, with S5 and S12 plays an important role in translational accuracy. In Paraburkholderia xenovorans (strain LB400), this protein is Small ribosomal subunit protein uS4.